The following is a 403-amino-acid chain: Large ribosomal subunit protein uL3 (403 aa).

Residues 1-38 (MSHRKFSAPRHGSLGFLPRKRSSRHRGKVKSFPKDDSS) are disordered. S13 carries the phosphoserine modification. Positions 18–31 (PRKRSSRHRGKVKS) are enriched in basic residues. K39 is covalently cross-linked (Glycyl lysine isopeptide (Lys-Gly) (interchain with G-Cter in SUMO2)). N6-acetyllysine is present on K136. Residues K224 and K226 each participate in a glycyl lysine isopeptide (Lys-Gly) (interchain with G-Cter in SUMO2) cross-link. Tele-methylhistidine is present on H245. N6-acetyllysine; alternate is present on residues K286 and K294. A Glycyl lysine isopeptide (Lys-Gly) (interchain with G-Cter in SUMO2); alternate cross-link involves residue K286. Residue K294 forms a Glycyl lysine isopeptide (Lys-Gly) (interchain with G-Cter in SUMO1); alternate linkage. S304 is modified (phosphoserine). N6-acetyllysine; alternate is present on K366. Residue K366 forms a Glycyl lysine isopeptide (Lys-Gly) (interchain with G-Cter in SUMO2); alternate linkage. K373 is modified (N6-acetyllysine). Glycyl lysine isopeptide (Lys-Gly) (interchain with G-Cter in SUMO2) cross-links involve residues K386, K393, and K399.

It belongs to the universal ribosomal protein uL3 family. Component of the large ribosomal subunit. Interacts with DHX33. Post-translationally, constitutively monomethylated at His-245 by METTL18. Methylation at His-245 regulates translation elongation by slowing ribosome traversal on tyrosine codons: slower elongation provides enough time for proper folding of synthesized proteins and prevents cellular aggregation of tyrosine-rich proteins It is not required for incorporation of RPL3 into ribosomes.

The protein resides in the nucleus. It is found in the nucleolus. Its subcellular location is the cytoplasm. Its function is as follows. Component of the large ribosomal subunit. The ribosome is a large ribonucleoprotein complex responsible for the synthesis of proteins in the cell. This is Large ribosomal subunit protein uL3 (RPL3) from Sus scrofa (Pig).